The sequence spans 201 residues: 5'-deoxynucleotidase HDDC2 (201 aa).

One can recognise an HD domain in the interval valine 43–isoleucine 145. A divalent metal cation contacts are provided by histidine 46, histidine 74, aspartate 75, glutamate 78, aspartate 83, isoleucine 84, and aspartate 140.

It belongs to the HDDC2 family. As to quaternary structure, homodimer. It depends on Mn(2+) as a cofactor. The cofactor is Co(2+). Requires Mg(2+) as cofactor.

The catalysed reaction is a 2'-deoxyribonucleoside 5'-phosphate + H2O = a 2'-deoxyribonucleoside + phosphate. Functionally, catalyzes the dephosphorylation of the nucleoside 5'-monophosphates deoxyadenosine monophosphate (dAMP), deoxycytidine monophosphate (dCMP), deoxyguanosine monophosphate (dGMP) and deoxythymidine monophosphate (dTMP). This chain is 5'-deoxynucleotidase HDDC2 (hddc2), found in Xenopus laevis (African clawed frog).